Reading from the N-terminus, the 790-residue chain is Kinesin-like protein KIF9 (790 aa).

The Kinesin motor domain occupies 6–340; that stretch reads KVQAFVRVRP…LRFASRMKLV (335 aa). Residues 12–14 and 93–100 contribute to the ATP site; these read RVR and GQTGAGKT. Residues 342–442 adopt a coiled-coil conformation; that stretch reads TEPAINEKYD…EQEVESALRR (101 aa). A disordered region spans residues 482–521; sequence GVAPFSVKPGKKPKTKKTPKDQFSSSARKEGASSPVSGKD. Phosphothreonine is present on threonine 530. Residues 547-577 are disordered; that stretch reads RERETSSIEPLISDSPKEELRAPRPSTPPSR. Residues 600 to 695 are a coiled coil; it reads KSILNERKKR…YCQRLVDQCR (96 aa).

It belongs to the TRAFAC class myosin-kinesin ATPase superfamily. Kinesin family. Interacts with HYDIN. In terms of tissue distribution, highly expressed in the testis (at protein level). Weakly expressed in the brain, thymus, lung and heart.

Its subcellular location is the cytoplasm. It is found in the cytoskeleton. It localises to the cell projection. The protein localises to the cilium. The protein resides in the flagellum. Its subcellular location is the flagellum axoneme. Functionally, essential for normal male fertility and for progressive motility of spermatozoa. This is Kinesin-like protein KIF9 (Kif9) from Mus musculus (Mouse).